A 326-amino-acid chain; its full sequence is Probable cell division protein WhiA (326 aa).

Positions 275–308 form a DNA-binding region, H-T-H motif; sequence SLDELGRLADPVMTKDAIAGRIRRLLAMADKRAL.

This sequence belongs to the WhiA family.

Functionally, involved in cell division and chromosome segregation. This is Probable cell division protein WhiA from Pseudarthrobacter chlorophenolicus (strain ATCC 700700 / DSM 12829 / CIP 107037 / JCM 12360 / KCTC 9906 / NCIMB 13794 / A6) (Arthrobacter chlorophenolicus).